A 629-amino-acid polypeptide reads, in one-letter code: 1-deoxy-D-xylulose-5-phosphate synthase (629 aa).

Residues His-73 and 114–116 (GHA) each bind thiamine diphosphate. Asp-145 lines the Mg(2+) pocket. Thiamine diphosphate is bound by residues 146 to 147 (GA), Asn-174, Tyr-284, and Glu-360. Residue Asn-174 coordinates Mg(2+).

It belongs to the transketolase family. DXPS subfamily. Homodimer. Mg(2+) is required as a cofactor. It depends on thiamine diphosphate as a cofactor.

The catalysed reaction is D-glyceraldehyde 3-phosphate + pyruvate + H(+) = 1-deoxy-D-xylulose 5-phosphate + CO2. Its pathway is metabolic intermediate biosynthesis; 1-deoxy-D-xylulose 5-phosphate biosynthesis; 1-deoxy-D-xylulose 5-phosphate from D-glyceraldehyde 3-phosphate and pyruvate: step 1/1. Its function is as follows. Catalyzes the acyloin condensation reaction between C atoms 2 and 3 of pyruvate and glyceraldehyde 3-phosphate to yield 1-deoxy-D-xylulose-5-phosphate (DXP). The polypeptide is 1-deoxy-D-xylulose-5-phosphate synthase (Thermomicrobium roseum (strain ATCC 27502 / DSM 5159 / P-2)).